A 137-amino-acid polypeptide reads, in one-letter code: MSGNGAQGTKFRISLGLPVGAIMNCADNSGARNLYIIAVKGSGSRLNRLPAASLGDMVMATVKKGKPELRKKVMPAIVVRQAKSWRRRDGVFLYFEDNAGVIANPKGEMKGSAITGPVGKECADLWPRVASNSGVVV.

At Ser2 the chain carries N-acetylserine. Residues Lys106 and Lys110 each carry the N6,N6-dimethyllysine; by RKM1 modification.

It belongs to the universal ribosomal protein uL14 family. In terms of assembly, component of the large ribosomal subunit (LSU). Mature yeast ribosomes consist of a small (40S) and a large (60S) subunit. The 40S small subunit contains 1 molecule of ribosomal RNA (18S rRNA) and 33 different proteins (encoded by 57 genes). The large 60S subunit contains 3 rRNA molecules (25S, 5.8S and 5S rRNA) and 46 different proteins (encoded by 81 genes). In terms of processing, methylated by RKM1 at 2 different sites, but it is unclear which are the 2 methylated residues among Lys-40, Lys-106 and/or Lys-110.

The protein resides in the cytoplasm. Its function is as follows. Component of the ribosome, a large ribonucleoprotein complex responsible for the synthesis of proteins in the cell. The small ribosomal subunit (SSU) binds messenger RNAs (mRNAs) and translates the encoded message by selecting cognate aminoacyl-transfer RNA (tRNA) molecules. The large subunit (LSU) contains the ribosomal catalytic site termed the peptidyl transferase center (PTC), which catalyzes the formation of peptide bonds, thereby polymerizing the amino acids delivered by tRNAs into a polypeptide chain. The nascent polypeptides leave the ribosome through a tunnel in the LSU and interact with protein factors that function in enzymatic processing, targeting, and the membrane insertion of nascent chains at the exit of the ribosomal tunnel. The polypeptide is Large ribosomal subunit protein uL14A (Saccharomyces cerevisiae (strain ATCC 204508 / S288c) (Baker's yeast)).